The chain runs to 185 residues: Peptidyl-tRNA hydrolase (185 aa).

Tyr14 contacts tRNA. His19 functions as the Proton acceptor in the catalytic mechanism. Residues Tyr64, Asn66, and Asn112 each coordinate tRNA.

It belongs to the PTH family. In terms of assembly, monomer.

It localises to the cytoplasm. It catalyses the reaction an N-acyl-L-alpha-aminoacyl-tRNA + H2O = an N-acyl-L-amino acid + a tRNA + H(+). Hydrolyzes ribosome-free peptidyl-tRNAs (with 1 or more amino acids incorporated), which drop off the ribosome during protein synthesis, or as a result of ribosome stalling. Functionally, catalyzes the release of premature peptidyl moieties from peptidyl-tRNA molecules trapped in stalled 50S ribosomal subunits, and thus maintains levels of free tRNAs and 50S ribosomes. The sequence is that of Peptidyl-tRNA hydrolase from Lactobacillus delbrueckii subsp. bulgaricus (strain ATCC 11842 / DSM 20081 / BCRC 10696 / JCM 1002 / NBRC 13953 / NCIMB 11778 / NCTC 12712 / WDCM 00102 / Lb 14).